A 211-amino-acid polypeptide reads, in one-letter code: Pyridoxine/pyridoxamine 5'-phosphate oxidase (211 aa).

Residues 7–10 (RREY) and Lys65 contribute to the substrate site. Residues 60–65 (RIVLLK), 75–76 (YT), Arg81, Lys82, and Gln104 contribute to the FMN site. Substrate-binding residues include Tyr122, Arg126, and Ser130. Residues 139–140 (QS) and Trp184 each bind FMN. 190–192 (RLH) serves as a coordination point for substrate. Arg194 contributes to the FMN binding site.

Belongs to the pyridoxamine 5'-phosphate oxidase family. As to quaternary structure, homodimer. Requires FMN as cofactor.

The enzyme catalyses pyridoxamine 5'-phosphate + O2 + H2O = pyridoxal 5'-phosphate + H2O2 + NH4(+). It carries out the reaction pyridoxine 5'-phosphate + O2 = pyridoxal 5'-phosphate + H2O2. It participates in cofactor metabolism; pyridoxal 5'-phosphate salvage; pyridoxal 5'-phosphate from pyridoxamine 5'-phosphate: step 1/1. It functions in the pathway cofactor metabolism; pyridoxal 5'-phosphate salvage; pyridoxal 5'-phosphate from pyridoxine 5'-phosphate: step 1/1. In terms of biological role, catalyzes the oxidation of either pyridoxine 5'-phosphate (PNP) or pyridoxamine 5'-phosphate (PMP) into pyridoxal 5'-phosphate (PLP). This chain is Pyridoxine/pyridoxamine 5'-phosphate oxidase, found in Vibrio cholerae serotype O1 (strain ATCC 39541 / Classical Ogawa 395 / O395).